A 150-amino-acid chain; its full sequence is Large ribosomal subunit protein bL9 (150 aa).

Belongs to the bacterial ribosomal protein bL9 family.

In terms of biological role, binds to the 23S rRNA. This chain is Large ribosomal subunit protein bL9, found in Buchnera aphidicola subsp. Schizaphis graminum (strain Sg).